Consider the following 221-residue polypeptide: Immediate early response gene 2 protein (221 aa).

M1 carries the post-translational modification N-acetylmethionine. The disordered stretch occupies residues 54–156 (THQPEFPPSR…EGEATSEVSN (103 aa)). A compositionally biased stretch (basic and acidic residues) spans 64 to 77 (RALDPRLHPPREPE). Positions 125–136 (SDLSDGSDAGLV) are enriched in low complexity.

This sequence belongs to the IER family.

The protein resides in the cytoplasm. Its subcellular location is the nucleus. Functionally, DNA-binding protein that seems to act as a transcription factor. Involved in the regulation of neuronal differentiation, acts upon JNK-signaling pathway activation and plays a role in neurite outgrowth in hippocampal cells. May mediate with FIBP FGF-signaling in the establishment of laterality in the embryo. Promotes cell motility, seems to stimulate tumor metastasis. The sequence is that of Immediate early response gene 2 protein (Ier2) from Rattus norvegicus (Rat).